A 337-amino-acid chain; its full sequence is Phosphate acyltransferase (337 aa).

It belongs to the PlsX family. As to quaternary structure, homodimer. Probably interacts with PlsY.

It is found in the cytoplasm. It carries out the reaction a fatty acyl-[ACP] + phosphate = an acyl phosphate + holo-[ACP]. Its pathway is lipid metabolism; phospholipid metabolism. Its function is as follows. Catalyzes the reversible formation of acyl-phosphate (acyl-PO(4)) from acyl-[acyl-carrier-protein] (acyl-ACP). This enzyme utilizes acyl-ACP as fatty acyl donor, but not acyl-CoA. The polypeptide is Phosphate acyltransferase (Listeria monocytogenes serotype 4b (strain F2365)).